The sequence spans 504 residues: Ribose import ATP-binding protein RbsA 3 (504 aa).

ABC transporter domains follow at residues 6–238 (ANLK…VGRP) and 251–494 (IGAE…MMGG). Residue 38–45 (GENGAGKS) coordinates ATP.

Belongs to the ABC transporter superfamily. Ribose importer (TC 3.A.1.2.1) family. The complex is composed of an ATP-binding protein (RbsA), two transmembrane proteins (RbsC) and a solute-binding protein (RbsB).

The protein localises to the cell inner membrane. The enzyme catalyses D-ribose(out) + ATP + H2O = D-ribose(in) + ADP + phosphate + H(+). Its function is as follows. Part of the ABC transporter complex RbsABC involved in ribose import. Responsible for energy coupling to the transport system. This is Ribose import ATP-binding protein RbsA 3 from Rhizobium meliloti (strain 1021) (Ensifer meliloti).